The primary structure comprises 81 residues: Photosystem I iron-sulfur center (81 aa).

2 4Fe-4S ferredoxin-type domains span residues 2-31 and 39-68; these read VHVV…MVPW and IASS…IRVY. 8 residues coordinate [4Fe-4S] cluster: Cys11, Cys14, Cys17, Cys21, Cys48, Cys51, Cys54, and Cys58.

In terms of assembly, the eukaryotic PSI reaction center is composed of at least 11 subunits. [4Fe-4S] cluster serves as cofactor.

The protein localises to the plastid. It localises to the chloroplast thylakoid membrane. The enzyme catalyses reduced [plastocyanin] + hnu + oxidized [2Fe-2S]-[ferredoxin] = oxidized [plastocyanin] + reduced [2Fe-2S]-[ferredoxin]. In terms of biological role, apoprotein for the two 4Fe-4S centers FA and FB of photosystem I (PSI); essential for photochemical activity. FB is the terminal electron acceptor of PSI, donating electrons to ferredoxin. The C-terminus interacts with PsaA/B/D and helps assemble the protein into the PSI complex. Required for binding of PsaD and PsaE to PSI. PSI is a plastocyanin/cytochrome c6-ferredoxin oxidoreductase, converting photonic excitation into a charge separation, which transfers an electron from the donor P700 chlorophyll pair to the spectroscopically characterized acceptors A0, A1, FX, FA and FB in turn. This is Photosystem I iron-sulfur center from Cyanidium caldarium (Red alga).